Reading from the N-terminus, the 348-residue chain is MTEFFQTLGMNYEWAWFTATIAGILLIALPVMLAVAMVIYVDRKVLGAIMLRRGPNVVGPFGLLQSFADGLKVFLQETIIPSAANKGIFLLAPIVTFVVALVAWAVIPFGDGMVLADINVGLLYVLAISSLGVYGIVMAGWASNSKYPFFSAMRAAAQMISYEVSIGFILICVVLWAGTFNLSEIVEAQRGHGLGIVNGYFFNILLFPMWVLFFISCLAETQRAPFDLTEAESELVAGYQTEYSSMSFALFWLGEYANILLLCSLNTVLFFGGWLPPIDWAPLYYVPGFLWFLIKTFLFFFMFSWIWATVPRYRYDQLMRLGWKVFLPMSLLFVFLISGYLMATGHYG.

8 consecutive transmembrane segments (helical) span residues 21 to 41 (IAGI…VIYV), 87 to 107 (GIFL…WAVI), 120 to 140 (VGLL…VMAG), 166 to 186 (IGFI…SEIV), 195 to 215 (GIVN…LFFI), 258 to 278 (NILL…LPPI), 288 to 308 (GFLW…WIWA), and 325 to 345 (VFLP…MATG).

The protein belongs to the complex I subunit 1 family. As to quaternary structure, NDH-1 is composed of 14 different subunits. Subunits NuoA, H, J, K, L, M, N constitute the membrane sector of the complex.

It is found in the cell inner membrane. It carries out the reaction a quinone + NADH + 5 H(+)(in) = a quinol + NAD(+) + 4 H(+)(out). In terms of biological role, NDH-1 shuttles electrons from NADH, via FMN and iron-sulfur (Fe-S) centers, to quinones in the respiratory chain. The immediate electron acceptor for the enzyme in this species is believed to be ubiquinone. Couples the redox reaction to proton translocation (for every two electrons transferred, four hydrogen ions are translocated across the cytoplasmic membrane), and thus conserves the redox energy in a proton gradient. This subunit may bind ubiquinone. This Erythrobacter litoralis (strain HTCC2594) protein is NADH-quinone oxidoreductase subunit H.